A 490-amino-acid chain; its full sequence is Acetyl-coenzyme A carboxylase carboxyl transferase subunit beta, chloroplastic (490 aa).

The tract at residues 184–203 (LNSSENEGSSRRTRTKGSDL) is disordered. Residues 221 to 490 (LWVQCENCYG…PLNQKSSKIK (270 aa)) form the CoA carboxyltransferase N-terminal domain. Zn(2+) is bound by residues Cys-225, Cys-228, Cys-244, and Cys-247. The C4-type zinc finger occupies 225-247 (CENCYGLNYKKFLKSKMNICEQC).

The protein belongs to the AccD/PCCB family. Acetyl-CoA carboxylase is a heterohexamer composed of biotin carboxyl carrier protein, biotin carboxylase and 2 subunits each of ACCase subunit alpha and ACCase plastid-coded subunit beta (accD). Zn(2+) is required as a cofactor. In terms of tissue distribution, RNA expressed in leaf, root, stem, and tuber; the least expression occurs in stems. RNA persists even in senescent leaves.

Its subcellular location is the plastid. It is found in the chloroplast stroma. The enzyme catalyses N(6)-carboxybiotinyl-L-lysyl-[protein] + acetyl-CoA = N(6)-biotinyl-L-lysyl-[protein] + malonyl-CoA. It functions in the pathway lipid metabolism; malonyl-CoA biosynthesis; malonyl-CoA from acetyl-CoA: step 1/1. In terms of biological role, component of the acetyl coenzyme A carboxylase (ACC) complex. Biotin carboxylase (BC) catalyzes the carboxylation of biotin on its carrier protein (BCCP) and then the CO(2) group is transferred by the transcarboxylase to acetyl-CoA to form malonyl-CoA. This Solanum tuberosum (Potato) protein is Acetyl-coenzyme A carboxylase carboxyl transferase subunit beta, chloroplastic.